A 619-amino-acid chain; its full sequence is Probable serine/threonine-protein kinase WNK8 (619 aa).

Residues 1–14 (MSGARRCGDRRSER) are compositionally biased toward basic and acidic residues. A disordered region spans residues 1 to 30 (MSGARRCGDRRSERSSVVGDNRNGYVETDP). In terms of domain architecture, Protein kinase spans 35–291 (GRLSEVLGKG…AEELLLDPFL (257 aa)). ATP-binding positions include 115–118 (TELF) and Lys163. Catalysis depends on Asp180, which acts as the Proton acceptor. 4 disordered regions span residues 293–335 (PPQN…AKTT), 419–464 (YADD…PGPH), 508–555 (CSAS…SMVD), and 585–619 (GFRD…HYMF). The span at 419–428 (YADDDDDDDV) shows a compositional bias: acidic residues. Over residues 439 to 448 (SSSPTSSQGS) the composition is skewed to low complexity. The span at 602–619 (QHRRRSSSKVDHKHHYMF) shows a compositional bias: basic residues.

Belongs to the protein kinase superfamily. Ser/Thr protein kinase family. WNK subfamily.

It carries out the reaction L-seryl-[protein] + ATP = O-phospho-L-seryl-[protein] + ADP + H(+). The enzyme catalyses L-threonyl-[protein] + ATP = O-phospho-L-threonyl-[protein] + ADP + H(+). The sequence is that of Probable serine/threonine-protein kinase WNK8 (WNK8) from Oryza sativa subsp. japonica (Rice).